The following is a 1091-amino-acid chain: Protein diaphanous (1091 aa).

The segment at 1-37 (MSRHEKTKSTGGGLLDSLFGRPSKSKGGTISSGTLAH) is disordered. Residues 1 to 56 (MSRHEKTKSTGGGLLDSLFGRPSKSKGGTISSGTLAHGGRPVSADNYVVPGVEDFE) form a basic region region. The segment covering 25-34 (SKGGTISSGT) has biased composition (low complexity). In terms of domain architecture, GBD/FH3 spans 59 to 431 (IQQLSVAELD…QIVFHKGYCD (373 aa)). The stretch at 455–496 (KAKESKRSEEYEKKIEQLESAKQEAEAKAAHLEEKVKLMEAN) forms a coiled coil. Disordered regions lie at residues 499–589 (AAPS…MMMG), 994–1021 (RLQEAREQSAREQQERQQRKKAVVDMDA), and 1039–1072 (GSAFGQRNRQARRQRPAGAERRAQLSRSRSRTRV). Positions 512–572 (PMPPPPPGGG…MGGPPPPPMP (61 aa)) are enriched in pro residues. Residues 512 to 596 (PMPPPPPGGG…MMGPMVPVLP (85 aa)) enclose the FH1 domain. Residues 601–1001 (PKKKWDVKNP…KRRLQEAREQ (401 aa)) form the FH2 domain. The segment covering 994–1010 (RLQEAREQSAREQQERQ) has biased composition (basic and acidic residues). The DAD domain occupies 1022–1054 (PQTQEGVMDSLLEALQTGSAFGQRNRQARRQRP).

This sequence belongs to the formin homology family. Diaphanous subfamily. May interact (via CBD/FH3 domain) with Rho1.

The protein localises to the cytoplasm. Its subcellular location is the cytoskeleton. It localises to the cleavage furrow. It is found in the apical cell membrane. In terms of biological role, required for cytokinesis in both mitosis and meiosis. Has a role in actin cytoskeleton organization and is essential for many, if not all, actin-mediated events involving membrane invagination. May serve as a mediator between signaling molecules and actin organizers at specific phases of the cell cycle. Possible component of the contractile ring or may control its function. The chain is Protein diaphanous (dia) from Drosophila melanogaster (Fruit fly).